We begin with the raw amino-acid sequence, 228 residues long: MPQLILIRHGQSQWNLENRFTGWWDVDVTEKGAAEAWAAGELMKAKGVAPDTCFTSVQTRAIKTLNLALEAMGRLWLPVTKDWRLNERHYGGLTGLDKAETAAKHGDEQVRIWRRSFDIPPPPLEAGSQWDLSADPRYAGIAIPSTESLKDTIARVLPYYEAAIAPQLAAGRTVLISAHGNSLRALVKHLSGISDADITGLEIPTGQPIVYEINDDLSARERYYLSER.

Residues Arg8–Asn15, Thr21–Gly22, Arg60, Glu87–Tyr90, Lys98, Arg114–Arg115, and Gly180–Asn181 contribute to the substrate site. Residue His9 is the Tele-phosphohistidine intermediate of the active site. The active-site Proton donor/acceptor is Glu87.

It belongs to the phosphoglycerate mutase family. BPG-dependent PGAM subfamily. Homodimer.

The catalysed reaction is (2R)-2-phosphoglycerate = (2R)-3-phosphoglycerate. Its pathway is carbohydrate degradation; glycolysis; pyruvate from D-glyceraldehyde 3-phosphate: step 3/5. Catalyzes the interconversion of 2-phosphoglycerate and 3-phosphoglycerate. The polypeptide is 2,3-bisphosphoglycerate-dependent phosphoglycerate mutase (Sphingopyxis alaskensis (strain DSM 13593 / LMG 18877 / RB2256) (Sphingomonas alaskensis)).